The primary structure comprises 176 residues: Ribosome maturation factor RimM (176 aa).

Positions P100–L172 constitute a PRC barrel domain.

Belongs to the RimM family. As to quaternary structure, binds ribosomal protein uS19.

The protein localises to the cytoplasm. Functionally, an accessory protein needed during the final step in the assembly of 30S ribosomal subunit, possibly for assembly of the head region. Essential for efficient processing of 16S rRNA. May be needed both before and after RbfA during the maturation of 16S rRNA. It has affinity for free ribosomal 30S subunits but not for 70S ribosomes. The protein is Ribosome maturation factor RimM of Mycobacterium bovis (strain ATCC BAA-935 / AF2122/97).